The sequence spans 411 residues: Fructose-1,6-bisphosphatase, chloroplastic (411 aa).

A chloroplast-targeting transit peptide spans 1–53 (MAATAGATPSSHLLLSSSRHVAASPQPRILFPSLSGKRVAVGKNHHATGVRCM). Mg(2+) is bound by residues E133, E162, D183, L185, and D186. 186–189 (DGSS) is a binding site for substrate. An intrachain disulfide couples C227 to C232. Substrate-binding residues include N291, Y323, Y341, Y343, and K353. E359 provides a ligand contact to Mg(2+).

Belongs to the FBPase class 1 family. Homotetramer. Mg(2+) is required as a cofactor.

The protein localises to the plastid. The protein resides in the chloroplast stroma. The catalysed reaction is beta-D-fructose 1,6-bisphosphate + H2O = beta-D-fructose 6-phosphate + phosphate. The protein operates within carbohydrate biosynthesis; Calvin cycle. The sequence is that of Fructose-1,6-bisphosphatase, chloroplastic (FBP) from Brassica napus (Rape).